Consider the following 1203-residue polypeptide: Nitric oxide synthase 3 (1203 aa).

The interval 1–71 is disordered; sequence MGNLKSVAQE…PPEGPKFPRV (71 aa). G2 carries N-myristoyl glycine lipidation. 2 S-palmitoyl cysteine lipidation sites follow: C15 and C26. Residues 15-27 are compositionally biased toward gly residues; the sequence is CGLGLGLGLGLCG. T33 bears the Phosphothreonine mark. The segment covering 33 to 66 has biased composition (pro residues); it reads TPAPEPSRAPASLLPPAPEHSPPSSPLTQPPEGP. Zn(2+) contacts are provided by C94 and C99. The segment at 98-486 is interaction with NOSIP; that stretch reads RCLGSLVFPR…PDPWKGSAAK (389 aa). S102 provides a ligand contact to (6R)-L-erythro-5,6,7,8-tetrahydrobiopterin. At S114 the chain carries Phosphoserine; by CDK5. Residue C184 coordinates heme b. Residues Q247, W356, Y357, and E361 each coordinate L-arginine. (6R)-L-erythro-5,6,7,8-tetrahydrobiopterin is bound at residue R365. N366 is an L-arginine binding site. 3 residues coordinate (6R)-L-erythro-5,6,7,8-tetrahydrobiopterin: A446, W447, and F460. Y475 contributes to the heme b binding site. The interval 491 to 510 is calmodulin-binding; the sequence is TRKKTFKEVANAVKISASLM. At T495 the chain carries Phosphothreonine; by AMPK. The Flavodoxin-like domain occupies 520-703; sequence ATILYGSETG…AFRGWAQAAF (184 aa). The FMN site is built by S526, E527, T528, R530, S572, and T573. Residues S615, S633, and S638 each carry the phosphoserine modification. FMN-binding residues include S654, C661, E687, and Q691. The FAD-binding FR-type domain maps to 756-1002; that stretch reads RKMFQATIRS…IRGAPSFRLP (247 aa). R776 lines the NADP(+) pocket. Residue H798 participates in FAD binding. A Phosphoserine modification is found at S836. Positions 938, 940, 941, 956, 958, 962, 975, 976, and 977 each coordinate FAD. Residues T1016, R1049, S1078, R1079, K1085, Y1087, and Q1089 each coordinate NADP(+). At T1175 the chain carries Phosphothreonine. S1177 carries the post-translational modification Phosphoserine; by AMPK. A Phosphoserine modification is found at S1179.

It belongs to the NOS family. Homodimer. Interacts with NOSIP and NOSTRIN. Interacts with HSP90AB1. Forms a complex with ASL, ASS1 and SLC7A1; the complex regulates cell-autonomous L-arginine synthesis and citrulline recycling while channeling extracellular L-arginine to nitric oxide synthesis pathway. Heme b is required as a cofactor. The cofactor is FAD. Requires FMN as cofactor. It depends on (6R)-L-erythro-5,6,7,8-tetrahydrobiopterin as a cofactor. Phosphorylation by AMPK at Ser-1177 in the presence of Ca(2+)-calmodulin (CaM) activates activity. In absence of Ca(2+)-calmodulin, AMPK also phosphorylates Thr-495, resulting in inhibition of activity. Phosphorylation of Ser-114 by CDK5 reduces activity. In terms of tissue distribution, platelets, placenta, liver and kidney.

The protein resides in the cell membrane. Its subcellular location is the membrane. It is found in the caveola. The protein localises to the cytoplasm. It localises to the cytoskeleton. The protein resides in the golgi apparatus. It carries out the reaction 2 L-arginine + 3 NADPH + 4 O2 + H(+) = 2 L-citrulline + 2 nitric oxide + 3 NADP(+) + 4 H2O. With respect to regulation, stimulated by calcium/calmodulin. Inhibited by NOSIP and NOSTRIN. Its function is as follows. Produces nitric oxide (NO) which is implicated in vascular smooth muscle relaxation through a cGMP-mediated signal transduction pathway. NO mediates vascular endothelial growth factor (VEGF)-induced angiogenesis in coronary vessels and promotes blood clotting through the activation of platelets. Lacks eNOS activity, dominant-negative form that may down-regulate eNOS activity by forming heterodimers with isoform 1. This Homo sapiens (Human) protein is Nitric oxide synthase 3.